Reading from the N-terminus, the 118-residue chain is Large ribosomal subunit protein bL20 (118 aa).

It belongs to the bacterial ribosomal protein bL20 family.

Its function is as follows. Binds directly to 23S ribosomal RNA and is necessary for the in vitro assembly process of the 50S ribosomal subunit. It is not involved in the protein synthesizing functions of that subunit. This Bacillus cytotoxicus (strain DSM 22905 / CIP 110041 / 391-98 / NVH 391-98) protein is Large ribosomal subunit protein bL20.